We begin with the raw amino-acid sequence, 766 residues long: Serine/threonine-protein kinase PKH1 (766 aa).

The tract at residues 1 to 52 (MGNRSLTEADHALLSKPLVPTSAEHTQTQEYPRPFVDGSNSQSGSELQASPQ) is disordered. Positions 38–52 (GSNSQSGSELQASPQ) are enriched in polar residues. Residues 125 to 391 (FKFGEQLGDG…IKQIKAHLFF (267 aa)) enclose the Protein kinase domain. ATP-binding positions include 135–137 (SYS) and Lys-154. The PIF-pocket stretch occupies residues 156-201 (LSKEYLIRQKKVKYVTVEKLALQKLNGTKGIFKLFFTFQDEASLYF). Residues 204–206 (EYA) and Asp-210 each bind ATP. Asp-249 serves as the catalytic Proton acceptor. ATP contacts are provided by Glu-253 and Asp-267. Phosphoserine is present on residues Ser-294 and Ser-296. A compositionally biased stretch (polar residues) spans 476–495 (TSQPKLGSKSSTSVRSASNN). Disordered regions lie at residues 476 to 529 (TSQP…NRSR) and 725 to 745 (PEEG…SSSN). Residues 511 to 521 (SVSSPSISTTS) show a composition bias toward low complexity. Residues 735 to 745 (PTSLQTRSSSN) are compositionally biased toward polar residues.

This sequence belongs to the protein kinase superfamily. AGC Ser/Thr protein kinase family. PDPK1 subfamily.

The enzyme catalyses L-seryl-[protein] + ATP = O-phospho-L-seryl-[protein] + ADP + H(+). It catalyses the reaction L-threonyl-[protein] + ATP = O-phospho-L-threonyl-[protein] + ADP + H(+). In terms of biological role, activates YPK1 by phosphorylating of a threonine residue. In Saccharomyces cerevisiae (strain ATCC 204508 / S288c) (Baker's yeast), this protein is Serine/threonine-protein kinase PKH1 (PKH1).